Consider the following 437-residue polypeptide: UDP-N-acetylmuramate--L-alanine ligase (437 aa).

108–114 provides a ligand contact to ATP; sequence GAHGKTS.

The protein belongs to the MurCDEF family.

Its subcellular location is the cytoplasm. The enzyme catalyses UDP-N-acetyl-alpha-D-muramate + L-alanine + ATP = UDP-N-acetyl-alpha-D-muramoyl-L-alanine + ADP + phosphate + H(+). It participates in cell wall biogenesis; peptidoglycan biosynthesis. In terms of biological role, cell wall formation. This chain is UDP-N-acetylmuramate--L-alanine ligase, found in Staphylococcus aureus (strain MRSA252).